The primary structure comprises 198 residues: TM2 domain-containing protein 2 (198 aa).

The signal sequence occupies residues 1–27 (MRWPVPPVGYLLLGGQGLLLTFSLISS). Residues 28–128 (QNQTSPVTYP…FLRGNKPCIK (101 aa)) are Extracellular-facing. N-linked (GlcNAc...) asparagine glycans are attached at residues Asn-29, Asn-40, and Asn-76. A helical membrane pass occupies residues 129 to 149 (YTGHYFITTLLYSFFLGCFGV). The TM2 domain occupies 131–179 (GHYFITTLLYSFFLGCFGVDRFCLGHTGTAVGKLLTLGGLGIWWFVDLI). Residues 150–166 (DRFCLGHTGTAVGKLLT) are Cytoplasmic-facing. A helical transmembrane segment spans residues 167–187 (LGGLGIWWFVDLILLITGGLM). Residues 188 to 198 (PSDNSNWCTIY) are Extracellular-facing.

This sequence belongs to the TM2 family.

It is found in the membrane. The chain is TM2 domain-containing protein 2 (tm2d2) from Xenopus tropicalis (Western clawed frog).